We begin with the raw amino-acid sequence, 270 residues long: MESTIQPLDRVFLHLGPITIYWYGVIIGTGVLIGLWLATREAVRRGLPKETFVDLVLFAVPIAIVCARAYYVLFEWHYYSKHLSEIPKVWQGGLAIHGGLIGAVATGAVFARARGLSFWKLADIAAPSIILGQAIGRWGNFMNQEAHGGPVSRQFLENLHLPDWIINQMYIDGRYWHPTFLYESLWNLVGFFLLLWLRRVNLRRGELFLSYLIWYSVGRFWIEGMRTDSLMLAGSLRAAQVVSVTLIVLSIALWIVRRAKGWAKARYQDE.

The next 4 membrane-spanning stretches (helical) occupy residues 18–38 (ITIY…LWLA), 55–75 (LVLF…VLFE), 90–110 (WQGG…GAVF), and 115–135 (GLSF…GQAI). R137 lines the a 1,2-diacyl-sn-glycero-3-phospho-(1'-sn-glycerol) pocket. Helical transmembrane passes span 177-197 (HPTF…LLWL), 205-225 (GELF…IEGM), and 236-256 (LRAA…LWIV).

This sequence belongs to the Lgt family.

It localises to the cell membrane. The catalysed reaction is L-cysteinyl-[prolipoprotein] + a 1,2-diacyl-sn-glycero-3-phospho-(1'-sn-glycerol) = an S-1,2-diacyl-sn-glyceryl-L-cysteinyl-[prolipoprotein] + sn-glycerol 1-phosphate + H(+). The protein operates within protein modification; lipoprotein biosynthesis (diacylglyceryl transfer). Functionally, catalyzes the transfer of the diacylglyceryl group from phosphatidylglycerol to the sulfhydryl group of the N-terminal cysteine of a prolipoprotein, the first step in the formation of mature lipoproteins. This is Phosphatidylglycerol--prolipoprotein diacylglyceryl transferase from Geobacillus kaustophilus (strain HTA426).